Consider the following 167-residue polypeptide: MASAEPLTALSRWYLYAIHGYFCEVMFTAAWEFVVNFNWKFPGVTSVWALFIYGTSILIVERMYLRLRGRCPLLLRCLIYTLWTYLWEFTTGFILRQFNACPWDYSQFDFDFMGLITLEYAVPWFCGALLVEQFVIRNTLRLRFDKDAEPGEPSGALALANGHVKTD.

At 1–14 (MASAEPLTALSRWY) the chain is on the cytoplasmic side. The helical transmembrane segment at 15-35 (LYAIHGYFCEVMFTAAWEFVV) threads the bilayer. The Extracellular portion of the chain corresponds to 36 to 40 (NFNWK). A helical transmembrane segment spans residues 41 to 61 (FPGVTSVWALFIYGTSILIVE). Topologically, residues 62–73 (RMYLRLRGRCPL) are cytoplasmic. A helical transmembrane segment spans residues 74 to 94 (LLRCLIYTLWTYLWEFTTGFI). At 95-111 (LRQFNACPWDYSQFDFD) the chain is on the extracellular side. The chain crosses the membrane as a helical span at residues 112-132 (FMGLITLEYAVPWFCGALLVE). The Cytoplasmic segment spans residues 133-167 (QFVIRNTLRLRFDKDAEPGEPSGALALANGHVKTD).

It belongs to the TMEM229 family.

The protein resides in the membrane. This Bos taurus (Bovine) protein is Transmembrane protein 229B (TMEM229B).